Here is a 307-residue protein sequence, read N- to C-terminus: Dihydroorotate dehydrogenase B (NAD(+)), catalytic subunit (307 aa).

FMN-binding positions include S22 and 46-47 (KA). Substrate contacts are provided by residues K46 and 70–74 (NAIGL). Residues N102 and N130 each coordinate FMN. N130 is a substrate binding site. The active-site Nucleophile is the C133. Residues K168 and I194 each contribute to the FMN site. Residue 195–196 (NT) participates in substrate binding. FMN-binding positions include G220, 246–247 (GG), and 268–269 (GT).

Belongs to the dihydroorotate dehydrogenase family. Type 1 subfamily. Heterotetramer of 2 PyrK and 2 PyrD type B subunits. FMN is required as a cofactor.

It localises to the cytoplasm. The catalysed reaction is (S)-dihydroorotate + NAD(+) = orotate + NADH + H(+). The protein operates within pyrimidine metabolism; UMP biosynthesis via de novo pathway; orotate from (S)-dihydroorotate (NAD(+) route): step 1/1. Its function is as follows. Catalyzes the conversion of dihydroorotate to orotate with NAD(+) as electron acceptor. In Latilactobacillus sakei subsp. sakei (strain 23K) (Lactobacillus sakei subsp. sakei), this protein is Dihydroorotate dehydrogenase B (NAD(+)), catalytic subunit (pyrD).